Reading from the N-terminus, the 161-residue chain is Small ribosomal subunit protein uS9 (161 aa).

The disordered stretch occupies residues 1–38; it reads MAQTITSLADLKQGPGAEPAGLSAEPQEPKLDKEGRAY. Residues 27–38 show a composition bias toward basic and acidic residues; that stretch reads QEPKLDKEGRAY.

It belongs to the universal ribosomal protein uS9 family.

The polypeptide is Small ribosomal subunit protein uS9 (Rhodospirillum centenum (strain ATCC 51521 / SW)).